The following is a 201-amino-acid chain: Aminoglycoside N(6')-acetyltransferase type 1 (201 aa).

The 168-residue stretch at 25–192 (VTLRLMTEHD…PAVYMVQTRQ (168 aa)) folds into the N-acetyltransferase domain. Substrate-binding residues include Trp51 and Asp154. Residue Asn159 participates in acetyl-CoA binding.

As to quaternary structure, homodimer.

It catalyses the reaction kanamycin B + acetyl-CoA = N(6')-acetylkanamycin B + CoA + H(+). Its function is as follows. Catalyzes the transfer of an acetyl group from acetyl-CoA to the 6'-amino group of aminoglycoside molecules conferring resistance to antibiotics containing the purpurosamine ring including amikacin and kanamycin. This chain is Aminoglycoside N(6')-acetyltransferase type 1 (aacA4), found in Serratia marcescens.